The sequence spans 484 residues: Dynein regulatory complex subunit 2 (484 aa).

Coiled-coil stretches lie at residues 92–160 (VDCK…RKTI) and 374–403 (KEQE…GMEN).

This sequence belongs to the DRC2 family. As to quaternary structure, component of the nexin-dynein regulatory complex (N-DRC). Interacts with DRC1.

It localises to the cytoplasm. Its subcellular location is the cytoskeleton. The protein localises to the flagellum basal body. The protein resides in the cell projection. It is found in the cilium. It localises to the flagellum. Its subcellular location is the flagellum axoneme. In terms of biological role, component of the nexin-dynein regulatory complex (N-DRC), a key regulator of ciliary/flagellar motility which maintains the alignment and integrity of the distal axoneme and regulates microtubule sliding in motile axonemes. Plays a critical role in the assembly of N-DRC and also stabilizes the assembly of multiple inner dynein arms and radial spokes. Coassembles with DRC1 to form a central scaffold needed for assembly of the N-DRC and its attachment to the outer doublet microtubules. The sequence is that of Dynein regulatory complex subunit 2 (CCDC65) from Macaca fascicularis (Crab-eating macaque).